A 63-amino-acid chain; its full sequence is Large ribosomal subunit protein uL29 (63 aa).

This sequence belongs to the universal ribosomal protein uL29 family.

This Enterobacter sp. (strain 638) protein is Large ribosomal subunit protein uL29.